A 323-amino-acid polypeptide reads, in one-letter code: Protein translocase subunit SecF (323 aa).

6 consecutive transmembrane segments (helical) span residues 19 to 39, 138 to 158, 162 to 182, 189 to 209, 244 to 264, and 269 to 289; these read GVIV…FKGF, ILSL…RYEW, LASV…VIVF, EVIA…IIIF, LTVF…IIGF, and LIGT…VALL.

Belongs to the SecD/SecF family. SecF subfamily. As to quaternary structure, forms a complex with SecD. Part of the essential Sec protein translocation apparatus which comprises SecA, SecYEG and auxiliary proteins SecDF-YajC and YidC.

Its subcellular location is the cell inner membrane. Its function is as follows. Part of the Sec protein translocase complex. Interacts with the SecYEG preprotein conducting channel. SecDF uses the proton motive force (PMF) to complete protein translocation after the ATP-dependent function of SecA. In Helicobacter pylori (strain ATCC 700392 / 26695) (Campylobacter pylori), this protein is Protein translocase subunit SecF.